The primary structure comprises 114 residues: Nucleoid-associated protein MAB_0319 (114 aa).

Belongs to the YbaB/EbfC family. As to quaternary structure, homodimer.

The protein localises to the cytoplasm. The protein resides in the nucleoid. Functionally, binds to DNA and alters its conformation. May be involved in regulation of gene expression, nucleoid organization and DNA protection. The chain is Nucleoid-associated protein MAB_0319 from Mycobacteroides abscessus (strain ATCC 19977 / DSM 44196 / CCUG 20993 / CIP 104536 / JCM 13569 / NCTC 13031 / TMC 1543 / L948) (Mycobacterium abscessus).